Here is an 848-residue protein sequence, read N- to C-terminus: ATP-dependent Clp protease ATP-binding subunit ClpC1 (848 aa).

Positions 2 to 144 constitute a Clp R domain; the sequence is FERFTDRARK…RQQVIQLLSG (143 aa). Repeat stretches follow at residues 5-70 and 80-144; these read FTDR…IGQG and FTPR…LLSG. Positions 171–418 are i; it reads LDQFGRNLTA…RMRIRRMTAP (248 aa). 216–223 contributes to the ATP binding site; sequence GEPGVGKT. The 36-residue stretch at 425 to 460 folds into the UVR domain; it reads DEKIAEARREKESAIDAQDFEKAASLRDREKTLVAQ. The segment at 479–670 is II; it reads VDDEQIAEVL…VLIFTSNLGT (192 aa). 553 to 560 contributes to the ATP binding site; it reads GPSGVGKT. Positions 821 to 848 are disordered; the sequence is TGTRKPPAEPDLAKAGAHSAGGPEPAAR.

Belongs to the ClpA/ClpB family. ClpC subfamily.

In terms of biological role, ATP-dependent specificity component of the Clp protease. It directs the protease to specific substrates. Can perform chaperone functions in the absence of ClpP. The polypeptide is ATP-dependent Clp protease ATP-binding subunit ClpC1 (clpC1) (Mycobacterium tuberculosis (strain CDC 1551 / Oshkosh)).